A 46-amino-acid chain; its full sequence is uncharacterized protein (46 aa).

The segment at 1 to 46 (MNFGIKPDVSSGPRKGGPFKELSDFSKTSPTPQQPRSLSGKSVMLP) is disordered. Residues 25-40 (FSKTSPTPQQPRSLSG) are compositionally biased toward polar residues.

This is an uncharacterized protein from Dictyostelium discoideum (Social amoeba).